Consider the following 337-residue polypeptide: ERI1 exoribonuclease 3 (337 aa).

An Exonuclease domain is found at 146-320; sequence FLVLDFEATC…DDCKNIANIM (175 aa). The Mg(2+) site is built by Asp-150, Glu-152, and Asp-249. Glu-152 functions as the Proton acceptor in the catalytic mechanism. Glu-152 is an AMP binding site. His-307 functions as the Proton acceptor in the catalytic mechanism. His-307 provides a ligand contact to AMP. A Mg(2+)-binding site is contributed by Asp-312.

Interacts with PRNP. The cofactor is Mg(2+).

The sequence is that of ERI1 exoribonuclease 3 (ERI3) from Homo sapiens (Human).